The primary structure comprises 606 residues: Sporulation kinase A (606 aa).

The region spanning 3-73 (QDTQHVKPLQ…SYFYNEHHLM (71 aa)) is the PAS 1 domain. The region spanning 77–116 (FRFIKKDHTIVWVEAAVEIVTTRAERTEREIILKMKVLEE) is the PAC 1 domain. One can recognise a PAS 2 domain in the interval 140-214 (YITDDYERLV…IRMQKGMEVG (75 aa)). A PAC 2 domain is found at 218–255 (QTWKRLDGTPVHLEVKASPTVYKNQQAELLLLIDISSR). A PAS 3 domain is found at 265–335 (SRERYQLLIQ…ERIQNIAEQK (71 aa)). Residues 402–606 (GIAHEIRNPL…TAFKISFPKK (205 aa)) enclose the Histidine kinase domain. At His405 the chain carries Phosphohistidine; by autocatalysis.

It catalyses the reaction ATP + protein L-histidine = ADP + protein N-phospho-L-histidine.. Phosphorylates the sporulation-regulatory proteins spo0A and spo0F. It also autophosphorylates in the presence of ATP. This is Sporulation kinase A (kinA) from Bacillus subtilis (strain 168).